The chain runs to 156 residues: Small ribosomal subunit protein uS7 (156 aa).

Belongs to the universal ribosomal protein uS7 family. Part of the 30S ribosomal subunit. Contacts proteins S9 and S11.

Its function is as follows. One of the primary rRNA binding proteins, it binds directly to 16S rRNA where it nucleates assembly of the head domain of the 30S subunit. Is located at the subunit interface close to the decoding center, probably blocks exit of the E-site tRNA. In Hahella chejuensis (strain KCTC 2396), this protein is Small ribosomal subunit protein uS7.